The following is a 198-amino-acid chain: Na(+)-translocating NADH-quinone reductase subunit E (198 aa).

A run of 6 helical transmembrane segments spans residues 11–31, 39–59, 77–97, 109–129, 140–160, and 176–196; these read AVFI…FLAV, FGLG…NNLV, FLNF…LEMI, LGIF…VSFM, IVYG…LASI, and LGVT…FSGV.

It belongs to the NqrDE/RnfAE family. In terms of assembly, composed of six subunits; NqrA, NqrB, NqrC, NqrD, NqrE and NqrF.

The protein localises to the cell inner membrane. The enzyme catalyses a ubiquinone + n Na(+)(in) + NADH + H(+) = a ubiquinol + n Na(+)(out) + NAD(+). Its function is as follows. NQR complex catalyzes the reduction of ubiquinone-1 to ubiquinol by two successive reactions, coupled with the transport of Na(+) ions from the cytoplasm to the periplasm. NqrA to NqrE are probably involved in the second step, the conversion of ubisemiquinone to ubiquinol. This is Na(+)-translocating NADH-quinone reductase subunit E from Proteus mirabilis (strain HI4320).